A 425-amino-acid polypeptide reads, in one-letter code: Dihydroorotase (425 aa).

Histidine 56 and histidine 58 together coordinate Zn(2+). Residues 58–60 (HYR) and asparagine 90 each bind substrate. Positions 148, 175, and 228 each coordinate Zn(2+). Asparagine 274 serves as a coordination point for substrate. Residue aspartate 301 coordinates Zn(2+). The active site involves aspartate 301. Substrate-binding positions include histidine 305 and 319 to 320 (FG).

It belongs to the metallo-dependent hydrolases superfamily. DHOase family. Class I DHOase subfamily. Zn(2+) serves as cofactor.

The enzyme catalyses (S)-dihydroorotate + H2O = N-carbamoyl-L-aspartate + H(+). Its pathway is pyrimidine metabolism; UMP biosynthesis via de novo pathway; (S)-dihydroorotate from bicarbonate: step 3/3. In terms of biological role, catalyzes the reversible cyclization of carbamoyl aspartate to dihydroorotate. The polypeptide is Dihydroorotase (Lactobacillus gasseri (strain ATCC 33323 / DSM 20243 / BCRC 14619 / CIP 102991 / JCM 1131 / KCTC 3163 / NCIMB 11718 / NCTC 13722 / AM63)).